We begin with the raw amino-acid sequence, 356 residues long: Butyrate kinase (356 aa).

This sequence belongs to the acetokinase family.

The protein localises to the cytoplasm. It catalyses the reaction butanoate + ATP = butanoyl phosphate + ADP. Its pathway is lipid metabolism; butanoate metabolism. In terms of biological role, catalyzes the conversion of butyryl-CoA through butyryl phosphate to butyrate. The sequence is that of Butyrate kinase (buk) from Clostridium perfringens (strain 13 / Type A).